The sequence spans 179 residues: Ubiquitin-conjugating enzyme E2 C (179 aa).

A2 bears the N-acetylalanine mark. Phosphoserine is present on S3. A UBC core domain is found at P30–S175. C114 acts as the Glycyl thioester intermediate in catalysis.

The protein belongs to the ubiquitin-conjugating enzyme family. Component of the APC/C complex, composed of at least 14 distinct subunits that assemble into a complex of at least 19 chains with a combined molecular mass of around 1.2 MDa. Within this complex, directly interacts with ANAPC2. In terms of processing, autoubiquitinated by the APC/C complex, leading to its degradation by the proteasome. Its degradation plays a central role in APC/C regulation, allowing cyclin-A accumulation before S phase entry. APC/C substrates inhibit the autoubiquitination of UBE2C/UBCH10 but not its E2 function, hence APC/C remaining active until its substrates have been destroyed.

The enzyme catalyses S-ubiquitinyl-[E1 ubiquitin-activating enzyme]-L-cysteine + [E2 ubiquitin-conjugating enzyme]-L-cysteine = [E1 ubiquitin-activating enzyme]-L-cysteine + S-ubiquitinyl-[E2 ubiquitin-conjugating enzyme]-L-cysteine.. It carries out the reaction S-ubiquitinyl-[E1 ubiquitin-activating enzyme]-L-cysteine + [acceptor protein]-L-lysine = [E1 ubiquitin-activating enzyme]-L-cysteine + N(6)-monoubiquitinyl-[acceptor protein]-L-lysine.. It functions in the pathway protein modification; protein ubiquitination. In terms of biological role, accepts ubiquitin from the E1 complex and catalyzes its covalent attachment to other proteins. In vitro catalyzes 'Lys-11'- and 'Lys-48'-linked polyubiquitination. Acts as an essential factor of the anaphase promoting complex/cyclosome (APC/C), a cell cycle-regulated ubiquitin ligase that controls progression through mitosis. Acts by initiating 'Lys-11'-linked polyubiquitin chains on APC/C substrates, leading to the degradation of APC/C substrates by the proteasome and promoting mitotic exit. The sequence is that of Ubiquitin-conjugating enzyme E2 C (Ube2c) from Mus musculus (Mouse).